The chain runs to 70 residues: Conotoxin Cl6.13 (70 aa).

Positions 1–21 are cleaved as a signal peptide; the sequence is MKFPLLFISLALAAFLTRVQD. The propeptide occupies 22–33; sequence ADSSVISKEKSV. 3 disulfides stabilise this stretch: Cys-41–Cys-58, Cys-48–Cys-63, and Cys-57–Cys-68.

In terms of tissue distribution, expressed by the venom duct.

Its subcellular location is the secreted. In Californiconus californicus (California cone), this protein is Conotoxin Cl6.13.